A 217-amino-acid chain; its full sequence is External core antigen (217 aa).

The signal sequence occupies residues 1 to 20 (MYLFHLCLVFACVPCPTVQA). The HBEAG stretch occupies residues 26-28 (GWL). The tract at residues 166-217 (APILSTLPEHTVIRRRGGSRAARSPRRRTPSPRRRRSQSPRRRRSQSPASNC) is disordered. A compositionally biased stretch (basic residues) spans 178-210 (IRRRGGSRAARSPRRRTPSPRRRRSQSPRRRRS). Residues 189-195 (SPRRRTP) form a 1; half-length repeat. Residues 189–211 (SPRRRTPSPRRRRSQSPRRRRSQ) are 3 X 8 AA repeats of S-P-R-R-R-R-S-Q. The propeptide occupies 189–217 (SPRRRTPSPRRRRSQSPRRRRSQSPASNC). 2 consecutive repeat copies span residues 196-203 (SPRRRRSQ) and 204-211 (SPRRRRSQ).

It belongs to the orthohepadnavirus precore antigen family. In terms of assembly, homodimerizes. In terms of processing, phosphorylated. Post-translationally, cleaved by host furin.

It is found in the secreted. The protein localises to the host nucleus. In terms of biological role, may regulate immune response to the intracellular capsid in acting as a T-cell tolerogen, by having an immunoregulatory effect which prevents destruction of infected cells by cytotoxic T-cells. This immune regulation may predispose to chronicity during perinatal infections and prevent severe liver injury during adult infections. The chain is External core antigen from Otospermophilus beecheyi (California ground squirrel).